A 776-amino-acid polypeptide reads, in one-letter code: Peregrinol diphosphate synthase CPS1, chloroplastic (776 aa).

The transit peptide at 1–17 (MASTPTLNLSITTPFVR) directs the protein to the chloroplast. Residue Lys238 participates in substrate binding. Asp371 and Asp373 together coordinate Mg(2+). Positions 371 to 374 (DIDD) match the DXDD motif motif. Lys457 serves as a coordination point for substrate.

This sequence belongs to the terpene synthase family. It depends on Mg(2+) as a cofactor. Present in both leaves and flowers, with higher levels in leaves.

The protein localises to the plastid. The protein resides in the chloroplast. It catalyses the reaction peregrinol diphosphate = (2E,6E,10E)-geranylgeranyl diphosphate + H2O. The protein operates within secondary metabolite biosynthesis; terpenoid biosynthesis. Functionally, involved in the biosynthesis of labdane-type diterpenoid including marrubiin and other labdane-related furanoid diterpenoids with potential applications as anti-diabetics, analgesics or vasorelaxants. Terpene synthase that produces peregrinol diphosphate from geranylgeranyl diphosphate (GGPP). This chain is Peregrinol diphosphate synthase CPS1, chloroplastic, found in Marrubium vulgare (White horehound).